The primary structure comprises 20 residues: FLPIIAGMAAKVICAITKKC.

An intrachain disulfide couples Cys14 to Cys20.

In terms of tissue distribution, expressed by the skin glands.

Its subcellular location is the secreted. In terms of biological role, antimicrobial peptide with activity against Gram-negative and Gram-positive bacteria (MIC=50 uM against E.coli, MIC=6 uM against S.aureus) and fungi (MIC=13 uM against C.albicans). Shows hemolytic activity on human erythrocytes (HC(50)=25 uM). The sequence is that of Brevinin-1SPb from Lithobates septentrionalis (Mink frog).